We begin with the raw amino-acid sequence, 161 residues long: Pleiotrophin-A (161 aa).

A signal peptide spans 1-23; it reads MRHQHGLFMLALLAFLFVITVLG. 5 disulfide bridges follow: C41-C70, C49-C79, C56-C83, C93-C125, and C103-C135. Chondroitin sulfate binding stretches follow at residues 86-93 and 117-125; these read KKQFGAEC and KRALHNAEC. Residues 136–161 form a disordered region; it reads GKVTKPKLQESKKKKKEGKNKEKLLD. The interval 141–161 is chondroitin sulfate A binding; that stretch reads PKLQESKKKKKEGKNKEKLLD.

It belongs to the pleiotrophin family. In terms of tissue distribution, expressed in high levels in brain and eye. Lower levels in bone. In the tailbud embryo stage, it is expressed exclusively in the central nervous system, especially in the hind region of the brain.

The protein localises to the secreted. Functionally, secreted growth factor that mediates its signal through cell-surface proteoglycan and non-proteoglycan receptors. Binds cell-surface proteoglycan receptor via their chondroitin sulfate (CS) groups. Thereby regulates many processes like cell proliferation, cell survival, cell growth, cell differentiation and cell migration. Has antibacterial activity against both Gram-positive and Gram-negative bacteria. The polypeptide is Pleiotrophin-A (ptn-a) (Xenopus laevis (African clawed frog)).